Here is a 275-residue protein sequence, read N- to C-terminus: Lincomycin biosynthesis protein LmbN (275 aa).

The 78-residue stretch at 1–78 folds into the Carrier domain; that stretch reads MSTLDEVLAL…AIAATVARIT (78 aa). Position 37 is an O-(pantetheine 4'-phosphoryl)serine (Ser-37). Positions 113–275 constitute an SIS domain; the sequence is LFDTWHAGGT…HHALCVAHAP (163 aa).

It functions in the pathway antibiotic biosynthesis; lincomycin biosynthesis. The protein is Lincomycin biosynthesis protein LmbN (lmbN) of Streptomyces lincolnensis.